The sequence spans 141 residues: HTH-type transcriptional regulator MntR (141 aa).

Residues 1–63 (MPTPSMEDYI…YEKYRGLVLT (63 aa)) enclose the HTH dtxR-type domain. Positions 8, 11, 77, 99, 102, and 103 each coordinate Mn(2+).

The protein belongs to the DtxR/MntR family. As to quaternary structure, homodimer.

Its subcellular location is the cytoplasm. DNA binding is strongly activated by Mn(2+). Its function is as follows. Central regulator of manganese homeostasis. The polypeptide is HTH-type transcriptional regulator MntR (Geobacillus thermodenitrificans (strain NG80-2)).